Consider the following 200-residue polypeptide: Type 1 fimbriae regulatory protein FimB (200 aa).

Positions 8-189 (KKRNFLTHSE…NAGRFYGIWD (182 aa)) constitute a Tyr recombinase domain. Residues Arg-47, Lys-72, His-141, Arg-144, and His-167 contribute to the active site. The active-site O-(3'-phospho-DNA)-tyrosine intermediate is the Tyr-176.

It belongs to the 'phage' integrase family.

Functionally, fimB is one of the 2 regulatory proteins which control the phase variation of type 1 fimbriae in E.coli. These proteins mediate the periodic inversion of a 300bp DNA segment that harbors the promoter for the fimbrial structural gene, fimA. FimB switches fimA on. This chain is Type 1 fimbriae regulatory protein FimB (fimB), found in Escherichia coli O157:H7.